A 527-amino-acid chain; its full sequence is Pentatricopeptide repeat-containing protein At5g41170, mitochondrial (527 aa).

The transit peptide at 1–35 directs the protein to the mitochondrion; it reads MAMRFFQLHRNRLVKGNSGKALSFSRLLDLSFWVR. 14 PPR repeats span residues 36–70, 71–105, 106–140, 141–175, 176–210, 211–245, 246–280, 281–315, 316–350, 351–385, 386–420, 424–458, 459–493, and 494–527; these read AFCN…RPLP, SIID…GVSH, DLYT…GFEP, DIVT…GIKP, DVVM…GIRP, DVVM…KIKP, DVIT…SIAP, NIFT…GCFP, DVVA…GLTG, NTIT…GVPP, NIRT…EMDG, NIWT…EMDI, GIIT…GVKP, and NVVT…DGVS.

Belongs to the PPR family. P subfamily.

The protein resides in the mitochondrion. In Arabidopsis thaliana (Mouse-ear cress), this protein is Pentatricopeptide repeat-containing protein At5g41170, mitochondrial.